A 99-amino-acid polypeptide reads, in one-letter code: Large ribosomal subunit protein bL25 (99 aa).

Belongs to the bacterial ribosomal protein bL25 family. Part of the 50S ribosomal subunit; part of the 5S rRNA/L5/L18/L25 subcomplex. Contacts the 5S rRNA. Binds to the 5S rRNA independently of L5 and L18.

This is one of the proteins that binds to the 5S RNA in the ribosome where it forms part of the central protuberance. The protein is Large ribosomal subunit protein bL25 of Nostoc sp. (strain PCC 7120 / SAG 25.82 / UTEX 2576).